The chain runs to 331 residues: Autoinducer 2 import system permease protein LsrD (331 aa).

10 helical membrane-spanning segments follow: residues tyrosine 7 to serine 27, isoleucine 45 to isoleucine 65, phenylalanine 67 to proline 87, isoleucine 90 to isoleucine 110, leucine 118 to isoleucine 138, leucine 162 to leucine 182, threonine 212 to valine 232, serine 240 to asparagine 260, isoleucine 261 to leucine 281, and isoleucine 288 to valine 308.

It belongs to the binding-protein-dependent transport system permease family. AraH/RbsC subfamily. As to quaternary structure, the complex is composed of two ATP-binding proteins (LsrA), two transmembrane proteins (LsrC and LsrD) and a solute-binding protein (LsrB).

The protein localises to the cell inner membrane. In terms of biological role, part of the ABC transporter complex LsrABCD involved in autoinducer 2 (AI-2) import. Probably responsible for the translocation of the substrate across the membrane. This is Autoinducer 2 import system permease protein LsrD (lsrD) from Yersinia enterocolitica serotype O:8 / biotype 1B (strain NCTC 13174 / 8081).